We begin with the raw amino-acid sequence, 695 residues long: Polyribonucleotide nucleotidyltransferase (695 aa).

Aspartate 488 and aspartate 494 together coordinate Mg(2+). One can recognise a KH domain in the interval 554 to 613 (PKTAVIKIQTDKIRDLIGKGGETIKGIISTSSASVDVDDNGNVNIFSNDQKSFDTAMQMV). Positions 623–690 (GKVYTGKVVK…DRGRIKLSRK (68 aa)) constitute an S1 motif domain.

It belongs to the polyribonucleotide nucleotidyltransferase family. In terms of assembly, component of the RNA degradosome, which is a multiprotein complex involved in RNA processing and mRNA degradation. The cofactor is Mg(2+).

It is found in the cytoplasm. The catalysed reaction is RNA(n+1) + phosphate = RNA(n) + a ribonucleoside 5'-diphosphate. Involved in mRNA degradation. Catalyzes the phosphorolysis of single-stranded polyribonucleotides processively in the 3'- to 5'-direction. The chain is Polyribonucleotide nucleotidyltransferase from Ruthia magnifica subsp. Calyptogena magnifica.